We begin with the raw amino-acid sequence, 80 residues long: MKNNINLQDVFLNQVRKENIQITIYLVNGFQLKGFVKGFDNYTIVLDSDGKQQLIYKHAISTILPITPINFMQSSKKQGE.

Positions 9-69 (DVFLNQVRKE…ISTILPITPI (61 aa)) constitute a Sm domain.

The protein belongs to the Hfq family. As to quaternary structure, homohexamer.

Its function is as follows. RNA chaperone that binds small regulatory RNA (sRNAs) and mRNAs to facilitate mRNA translational regulation in response to envelope stress, environmental stress and changes in metabolite concentrations. Also binds with high specificity to tRNAs. In Alkaliphilus metalliredigens (strain QYMF), this protein is RNA-binding protein Hfq.